The following is a 570-amino-acid chain: Adenine deaminase 2 (570 aa).

The protein belongs to the metallo-dependent hydrolases superfamily. Adenine deaminase family. It depends on Mn(2+) as a cofactor.

It carries out the reaction adenine + H2O + H(+) = hypoxanthine + NH4(+). This chain is Adenine deaminase 2, found in Carboxydothermus hydrogenoformans (strain ATCC BAA-161 / DSM 6008 / Z-2901).